The primary structure comprises 291 residues: Pantothenate synthetase (291 aa).

Residue 30-37 (MGALHAGH) participates in ATP binding. His37 serves as the catalytic Proton donor. A (R)-pantoate-binding site is contributed by Gln61. Gln61 lines the beta-alanine pocket. 147 to 150 (GQKD) serves as a coordination point for ATP. Position 153 (Gln153) interacts with (R)-pantoate. ATP-binding positions include Val176 and 184-187 (LSSR).

The protein belongs to the pantothenate synthetase family. Homodimer.

The protein resides in the cytoplasm. It catalyses the reaction (R)-pantoate + beta-alanine + ATP = (R)-pantothenate + AMP + diphosphate + H(+). The protein operates within cofactor biosynthesis; (R)-pantothenate biosynthesis; (R)-pantothenate from (R)-pantoate and beta-alanine: step 1/1. Its function is as follows. Catalyzes the condensation of pantoate with beta-alanine in an ATP-dependent reaction via a pantoyl-adenylate intermediate. The chain is Pantothenate synthetase from Koribacter versatilis (strain Ellin345).